Reading from the N-terminus, the 977-residue chain is SLIT and NTRK-like protein 3 (977 aa).

Residues 1–26 form the signal peptide; sequence MKPSIAEMLHRGRMLWIILLSTIALG. The Extracellular portion of the chain corresponds to 29–654; it reads TPIPLIEDSE…SPPGGPVPLS (626 aa). N-linked (GlcNAc...) asparagine glycosylation is present at Asn68. LRR repeat units lie at residues 78–99, 102–123, 126–147, 150–171, 174–195, and 197–218; these read RPFK…SFLH, NAVS…AFNG, ILKR…TFLG, SLEY…AFRN, KLRV…LFKA, and SLTH…GMLD. The LRRCT 1 domain occupies 232–283; sequence NPWNCTCEIVQLKSWLERIPYTALVGDITCETPFHFHGKDLREIRKTELCPL. The segment at 325–360 is disordered; the sequence is EYKSSNKQPKPTKQPRTPRPPSTSQALYPGPNQPPI. Positions 364-406 constitute an LRRNT domain; that stretch reads QTRPPIPIICPTGCTCNLHINDLGLTVNCKERGFNNISELLPR. LRR repeat units lie at residues 409 to 430, 433 to 454, 457 to 478, 481 to 502, 505 to 526, and 528 to 549; these read NAKK…DFWN, SLDL…AFIN, NLKS…MFRG, SLHY…AFSL, NLKL…AFAG, and SLAR…GVLE. The LRRCT 2 domain maps to 562 to 613; sequence NPWDCTCDLVPFKQWIETISSVSVVGDVLCRSPENLTHRDVRTIELEVLCPE. An N-linked (GlcNAc...) asparagine glycan is attached at Asn596. A helical membrane pass occupies residues 655–675; sequence VLILSLLVLFFSAVFVAAGLF. Residues 676–977 are Cytoplasmic-facing; that stretch reads AYVLRRRRKK…EVLEKTTYRF (302 aa). 2 disordered regions span residues 708–735 and 761–790; these read LFED…KAPP and EEEV…MGEA. Residues 711–724 are compositionally biased toward gly residues; the sequence is DGGGGGGGSGGGGR. The span at 765–775 shows a compositional bias: low complexity; the sequence is AVSSAQEAGSA.

Belongs to the SLITRK family. Expressed in the occipital lobe of the cerebral cortex of the brain. Expressed at higher levels in some astrocytic brain tumors such as astrocytomas, oligodendrogliomas, glioblastomas, gangliogliomas and primitive neuroectodermal tumors.

Its subcellular location is the membrane. Suppresses neurite outgrowth. This chain is SLIT and NTRK-like protein 3 (SLITRK3), found in Homo sapiens (Human).